A 752-amino-acid polypeptide reads, in one-letter code: Double zinc ribbon and ankyrin repeat-containing protein 1 (752 aa).

2 consecutive DZANK-type zinc fingers follow at residues 210–270 (CPKC…VVCE) and 338–386 (CSKC…GGCG). Residues 448–469 (KKRSQQREAELSRQEQMRDRKP) show a composition bias toward basic and acidic residues. Disordered stretches follow at residues 448–471 (KKRS…KPLL) and 536–614 (PPEE…VGPE). Residues 536 to 554 (PPEESRSSSAGQRSRSVTS) show a composition bias toward low complexity. The segment covering 555 to 580 (ESQNLSSVTEGRNSASPENNINTTGS) has biased composition (polar residues). Positions 600–614 (PESKDSLLLKEVGPE) are enriched in basic and acidic residues. 3 ANK repeats span residues 638–667 (DGRP…DVNQ), 672–703 (LKNT…SIRK), and 707–737 (RGQT…GLLL).

It is found in the cytoplasm. The protein resides in the cytoskeleton. Its subcellular location is the microtubule organizing center. It localises to the centrosome. The protein localises to the cilium basal body. Its function is as follows. Required for the intracellular transport of organelles and vesicles, and is essential for the photoreceptor's outer segments formation, maintenance and function. This chain is Double zinc ribbon and ankyrin repeat-containing protein 1 (dzank1), found in Danio rerio (Zebrafish).